A 430-amino-acid chain; its full sequence is Adenylosuccinate synthetase (430 aa).

GTP contacts are provided by residues 12–18 (GDEGKGK) and 40–42 (GHT). The Proton acceptor role is filled by D13. Residues D13 and G40 each contribute to the Mg(2+) site. IMP-binding positions include 13-16 (DEGK), 38-41 (NAGH), T129, R143, Q224, T239, and R303. H41 acts as the Proton donor in catalysis. Residue 299 to 305 (TVSNRKR) coordinates substrate. GTP contacts are provided by residues R305, 331 to 333 (KLD), and 413 to 415 (STG).

It belongs to the adenylosuccinate synthetase family. In terms of assembly, homodimer. The cofactor is Mg(2+).

The protein localises to the cytoplasm. It catalyses the reaction IMP + L-aspartate + GTP = N(6)-(1,2-dicarboxyethyl)-AMP + GDP + phosphate + 2 H(+). It functions in the pathway purine metabolism; AMP biosynthesis via de novo pathway; AMP from IMP: step 1/2. Its function is as follows. Plays an important role in the de novo pathway of purine nucleotide biosynthesis. Catalyzes the first committed step in the biosynthesis of AMP from IMP. The chain is Adenylosuccinate synthetase from Ehrlichia chaffeensis (strain ATCC CRL-10679 / Arkansas).